Consider the following 420-residue polypeptide: 3-phosphoshikimate 1-carboxyvinyltransferase (420 aa).

Positions 20, 21, and 25 each coordinate 3-phosphoshikimate. Lys20 provides a ligand contact to phosphoenolpyruvate. A phosphoenolpyruvate-binding site is contributed by Arg119. The 3-phosphoshikimate site is built by Ser161, Ser162, Gln163, Ser189, Asp303, Gln326, and Lys330. Gln163 lines the phosphoenolpyruvate pocket. The active-site Proton acceptor is Asp303. The phosphoenolpyruvate site is built by Arg334, Arg375, and Lys400.

The protein belongs to the EPSP synthase family. Monomer.

The protein resides in the cytoplasm. It carries out the reaction 3-phosphoshikimate + phosphoenolpyruvate = 5-O-(1-carboxyvinyl)-3-phosphoshikimate + phosphate. It functions in the pathway metabolic intermediate biosynthesis; chorismate biosynthesis; chorismate from D-erythrose 4-phosphate and phosphoenolpyruvate: step 6/7. In terms of biological role, catalyzes the transfer of the enolpyruvyl moiety of phosphoenolpyruvate (PEP) to the 5-hydroxyl of shikimate-3-phosphate (S3P) to produce enolpyruvyl shikimate-3-phosphate and inorganic phosphate. This chain is 3-phosphoshikimate 1-carboxyvinyltransferase, found in Dehalococcoides mccartyi (strain ATCC BAA-2100 / JCM 16839 / KCTC 5957 / BAV1).